The primary structure comprises 283 residues: 2-dehydro-3-deoxyphosphooctonate aldolase (283 aa).

It belongs to the KdsA family.

It localises to the cytoplasm. It carries out the reaction D-arabinose 5-phosphate + phosphoenolpyruvate + H2O = 3-deoxy-alpha-D-manno-2-octulosonate-8-phosphate + phosphate. Its pathway is carbohydrate biosynthesis; 3-deoxy-D-manno-octulosonate biosynthesis; 3-deoxy-D-manno-octulosonate from D-ribulose 5-phosphate: step 2/3. The protein operates within bacterial outer membrane biogenesis; lipopolysaccharide biosynthesis. The protein is 2-dehydro-3-deoxyphosphooctonate aldolase of Shewanella frigidimarina (strain NCIMB 400).